The primary structure comprises 381 residues: Succinyl-diaminopimelate desuccinylase (381 aa).

Histidine 72 contacts Zn(2+). Aspartate 74 is a catalytic residue. Residue aspartate 105 coordinates Zn(2+). The Proton acceptor role is filled by glutamate 139. The Zn(2+) site is built by glutamate 140, glutamate 168, and histidine 354.

The protein belongs to the peptidase M20A family. DapE subfamily. Homodimer. Zn(2+) is required as a cofactor. It depends on Co(2+) as a cofactor.

It carries out the reaction N-succinyl-(2S,6S)-2,6-diaminopimelate + H2O = (2S,6S)-2,6-diaminopimelate + succinate. Its pathway is amino-acid biosynthesis; L-lysine biosynthesis via DAP pathway; LL-2,6-diaminopimelate from (S)-tetrahydrodipicolinate (succinylase route): step 3/3. Functionally, catalyzes the hydrolysis of N-succinyl-L,L-diaminopimelic acid (SDAP), forming succinate and LL-2,6-diaminopimelate (DAP), an intermediate involved in the bacterial biosynthesis of lysine and meso-diaminopimelic acid, an essential component of bacterial cell walls. In Shewanella sp. (strain MR-7), this protein is Succinyl-diaminopimelate desuccinylase.